Reading from the N-terminus, the 123-residue chain is Large ribosomal subunit protein uL29 (123 aa).

It belongs to the universal ribosomal protein uL29 family. Component of the large ribosomal subunit.

It localises to the cytoplasm. In terms of biological role, component of the large ribosomal subunit. The ribosome is a large ribonucleoprotein complex responsible for the synthesis of proteins in the cell. Plays an essential role in early embryonic development. May act as a haploinsufficient tumor suppressor. The polypeptide is Large ribosomal subunit protein uL29 (rpl35) (Danio rerio (Zebrafish)).